A 426-amino-acid chain; its full sequence is 5-methylthioadenosine/S-adenosylhomocysteine deaminase (426 aa).

The Zn(2+) site is built by H60 and H62. 2 residues coordinate substrate: E89 and H179. A Zn(2+)-binding site is contributed by H206. Substrate is bound by residues E209 and D294. D294 contributes to the Zn(2+) binding site.

This sequence belongs to the metallo-dependent hydrolases superfamily. MTA/SAH deaminase family. Requires Zn(2+) as cofactor.

The enzyme catalyses S-adenosyl-L-homocysteine + H2O + H(+) = S-inosyl-L-homocysteine + NH4(+). It carries out the reaction S-methyl-5'-thioadenosine + H2O + H(+) = S-methyl-5'-thioinosine + NH4(+). Its function is as follows. Catalyzes the deamination of 5-methylthioadenosine and S-adenosyl-L-homocysteine into 5-methylthioinosine and S-inosyl-L-homocysteine, respectively. Is also able to deaminate adenosine. The sequence is that of 5-methylthioadenosine/S-adenosylhomocysteine deaminase from Dictyoglomus turgidum (strain DSM 6724 / Z-1310).